The following is a 538-amino-acid chain: Putative outer membrane porin BglH (538 aa).

Residues 1–25 form the signal peptide; that stretch reads MFRRNLITSAILLMAPLAFSAQSLA. The disordered stretch occupies residues 52–82; the sequence is KDEEKKKYTPATVNRSVSTNDQGYAANPFPT. Residues 62 to 73 are compositionally biased toward polar residues; that stretch reads ATVNRSVSTNDQ.

It belongs to the porin LamB (TC 1.B.3) family.

It localises to the cell outer membrane. Functionally, may be a sugar porin with a broad carbohydrate specificity. The protein is Putative outer membrane porin BglH (bglH) of Shigella flexneri serotype 5b (strain 8401).